We begin with the raw amino-acid sequence, 121 residues long: Large ribosomal subunit protein bL20 (121 aa).

It belongs to the bacterial ribosomal protein bL20 family.

Binds directly to 23S ribosomal RNA and is necessary for the in vitro assembly process of the 50S ribosomal subunit. It is not involved in the protein synthesizing functions of that subunit. In Beijerinckia indica subsp. indica (strain ATCC 9039 / DSM 1715 / NCIMB 8712), this protein is Large ribosomal subunit protein bL20.